Here is a 644-residue protein sequence, read N- to C-terminus: Acetyl-coenzyme A synthetase (644 aa).

Residues 189-192 and T307 contribute to the CoA site; that span reads RGGK. ATP is bound by residues 383 to 385, 407 to 412, D496, and R511; these read GEP and DTWWQT. S519 is a binding site for CoA. R522 is an ATP binding site. Mg(2+) contacts are provided by V533, H535, and V538. CoA is bound at residue R580. An N6-acetyllysine modification is found at K605.

Belongs to the ATP-dependent AMP-binding enzyme family. Mg(2+) serves as cofactor. In terms of processing, acetylated. Deacetylation by the SIR2-homolog deacetylase activates the enzyme.

The catalysed reaction is acetate + ATP + CoA = acetyl-CoA + AMP + diphosphate. Its function is as follows. Catalyzes the conversion of acetate into acetyl-CoA (AcCoA), an essential intermediate at the junction of anabolic and catabolic pathways. AcsA undergoes a two-step reaction. In the first half reaction, AcsA combines acetate with ATP to form acetyl-adenylate (AcAMP) intermediate. In the second half reaction, it can then transfer the acetyl group from AcAMP to the sulfhydryl group of CoA, forming the product AcCoA. The protein is Acetyl-coenzyme A synthetase of Rubrobacter xylanophilus (strain DSM 9941 / JCM 11954 / NBRC 16129 / PRD-1).